The primary structure comprises 180 residues: uncharacterized protein (180 aa).

A signal peptide spans 1–22 (MKRSIIAAAVFSSFFMSAGVFA).

This sequence belongs to the fimbrial protein family.

Part of the yehABCD fimbrial operon. Could contribute to adhesion to various surfaces in specific environmental niches. This is an uncharacterized protein from Escherichia coli (strain K12).